The following is a 526-amino-acid chain: tRNA-2-methylthio-N(6)-dimethylallyladenosine synthase (526 aa).

The MTTase N-terminal domain maps to 14-130 (RTYQVRTYGC…LPTLLERARH (117 aa)). Residues Cys-23, Cys-59, Cys-93, Cys-167, Cys-171, and Cys-174 each contribute to the [4Fe-4S] cluster site. Residues 153–401 (RESAYAGWVS…IELQERISLE (249 aa)) enclose the Radical SAM core domain. One can recognise a TRAM domain in the interval 404–483 (QAQVGRTLEL…PHHLIADGAL (80 aa)).

This sequence belongs to the methylthiotransferase family. MiaB subfamily. Monomer. Requires [4Fe-4S] cluster as cofactor.

The protein localises to the cytoplasm. The enzyme catalyses N(6)-dimethylallyladenosine(37) in tRNA + (sulfur carrier)-SH + AH2 + 2 S-adenosyl-L-methionine = 2-methylsulfanyl-N(6)-dimethylallyladenosine(37) in tRNA + (sulfur carrier)-H + 5'-deoxyadenosine + L-methionine + A + S-adenosyl-L-homocysteine + 2 H(+). Its function is as follows. Catalyzes the methylthiolation of N6-(dimethylallyl)adenosine (i(6)A), leading to the formation of 2-methylthio-N6-(dimethylallyl)adenosine (ms(2)i(6)A) at position 37 in tRNAs that read codons beginning with uridine. In Mycobacterium sp. (strain JLS), this protein is tRNA-2-methylthio-N(6)-dimethylallyladenosine synthase.